Consider the following 372-residue polypeptide: Flagellar P-ring protein (372 aa).

The N-terminal stretch at 1–26 (MNLSSLPHRLLAAAVALCAIAAPASA) is a signal peptide.

This sequence belongs to the FlgI family. In terms of assembly, the basal body constitutes a major portion of the flagellar organelle and consists of four rings (L,P,S, and M) mounted on a central rod.

It localises to the periplasm. It is found in the bacterial flagellum basal body. In terms of biological role, assembles around the rod to form the L-ring and probably protects the motor/basal body from shearing forces during rotation. This Xanthomonas campestris pv. campestris (strain ATCC 33913 / DSM 3586 / NCPPB 528 / LMG 568 / P 25) protein is Flagellar P-ring protein.